A 445-amino-acid polypeptide reads, in one-letter code: tRNA-2-methylthio-N(6)-dimethylallyladenosine synthase (445 aa).

Residues 3–124 enclose the MTTase N-terminal domain; that stretch reads KNLYIKTYGC…LPELISKIVR (122 aa). [4Fe-4S] cluster-binding residues include Cys12, Cys48, Cys87, Cys162, Cys166, and Cys169. The region spanning 148–380 is the Radical SAM core domain; that stretch reads YPQGASSFIS…QKELMDQQLA (233 aa). Positions 383-445 constitute a TRAM domain; that stretch reads ESCVGSTIKV…SLNSLTGEIL (63 aa).

The protein belongs to the methylthiotransferase family. MiaB subfamily. As to quaternary structure, monomer. [4Fe-4S] cluster serves as cofactor.

The protein localises to the cytoplasm. The catalysed reaction is N(6)-dimethylallyladenosine(37) in tRNA + (sulfur carrier)-SH + AH2 + 2 S-adenosyl-L-methionine = 2-methylsulfanyl-N(6)-dimethylallyladenosine(37) in tRNA + (sulfur carrier)-H + 5'-deoxyadenosine + L-methionine + A + S-adenosyl-L-homocysteine + 2 H(+). Its function is as follows. Catalyzes the methylthiolation of N6-(dimethylallyl)adenosine (i(6)A), leading to the formation of 2-methylthio-N6-(dimethylallyl)adenosine (ms(2)i(6)A) at position 37 in tRNAs that read codons beginning with uridine. The polypeptide is tRNA-2-methylthio-N(6)-dimethylallyladenosine synthase (Rickettsia akari (strain Hartford)).